Reading from the N-terminus, the 390-residue chain is ATP-sensitive inward rectifier potassium channel 11 (390 aa).

Topologically, residues 1 to 65 are cytoplasmic; that stretch reads MLSRKGIIPE…LQDVFTTLVD (65 aa). ATP is bound by residues Asn48 and Arg50. Residues 66–92 form a helical membrane-spanning segment; that stretch reads LKWPHTLLIFTMSFLCSWLLFAMAWWL. At 93 to 116 the chain is on the extracellular side; sequence IAFAHGDLAPSEGTAEPCVTSIHS. Cysteines 110 and 142 form a disulfide. Residues 117–133 constitute an intramembrane region (discontinuously helical; Pore-forming); sequence FSSAFLFSIEVQVTIGF. The K(+) site is built by Thr130 and Phe133. A Selectivity filter motif is present at residues 130-135; it reads TIGFGG. Residues 134–142 lie on the Extracellular side of the membrane; it reads GGRMVTEEC. Residues 143 to 171 traverse the membrane as a helical segment; the sequence is PLAILILIVQNIVGLMINAIMLGCIFMKT. Over 172 to 390 the chain is Cytoplasmic; that stretch reads AQAHRRAETL…KFSISPDSLS (219 aa). Arg176 provides a ligand contact to a 1,2-diacyl-sn-glycero-3-phospho-(1D-myo-inositol-4,5-bisphosphate). Position 330 (Tyr330) interacts with ATP. Thr341 bears the Phosphothreonine; by MAPK1 mark. A Phosphoserine; by MAPK1 modification is found at Ser385.

It belongs to the inward rectifier-type potassium channel (TC 1.A.2.1) family. KCNJ11 subfamily. As to quaternary structure, homotetramer; the homotetramer binds four ATP molecules (one ATP per subunit). Forms an heterooctamer with ABCC8/SUR1; one KCNJ11 homotetramer interacts with four ABCC8/SUR1 molecules. Interacts with ABCC9/SUR2. Phosphorylation by MAPK1 results in changes in channel gating that destabilize the closed states and reduce the ATP sensitivity.

Its subcellular location is the membrane. It catalyses the reaction K(+)(in) = K(+)(out). KATP channels are regulated by cytoplasmic ATP/ADP ratios; ATP inhibits the channel by closing the pore, while ADP activates the channel. Activated by phosphatidylinositol 4,5-biphosphate (PtdIns(4,5)P2). Functionally, inward rectifier potassium channel that forms the pore of ATP-sensitive potassium channels (KATP), regulating potassium permeability as a function of cytoplasmic ATP and ADP concentrations in many different cells. Inward rectifier potassium channels are characterized by a greater tendency to allow potassium to flow into the cell rather than out of it. Their voltage dependence is regulated by the concentration of extracellular potassium; as external potassium is raised, the voltage range of the channel opening shifts to more positive voltages. The inward rectification is mainly due to the blockage of outward current by internal magnesium. Can be blocked by extracellular barium. In pancreatic cells, it forms KATP channels with ABCC8/SUR1. Can form cardiac and smooth muscle-type KATP channels with ABCC9. The chain is ATP-sensitive inward rectifier potassium channel 11 (KCNJ11) from Homo sapiens (Human).